A 180-amino-acid polypeptide reads, in one-letter code: Major urinary protein 1 (180 aa).

A signal peptide spans 1-18; the sequence is MKMLLLLCLGLTLVCVHA. A disulfide bridge links cysteine 82 with cysteine 175.

This sequence belongs to the calycin superfamily. Lipocalin family. Abundant in the urine of adult male mice but absent from that of females.

It localises to the secreted. Functionally, binds pheromones that are released from drying urine of males. These pheromones affect the sexual behavior of females. The polypeptide is Major urinary protein 1 (Mup1) (Mus musculus (Mouse)).